A 450-amino-acid polypeptide reads, in one-letter code: Serine--tRNA ligase, cytoplasmic (450 aa).

Position 238–240 (238–240 (TSE)) interacts with L-serine. ATP is bound by residues 271-273 (RRE) and V287. Residue E294 participates in L-serine binding. 358-361 (ELVS) lines the ATP pocket. L-serine is bound at residue T396.

The protein belongs to the class-II aminoacyl-tRNA synthetase family. Type-1 seryl-tRNA synthetase subfamily. In terms of assembly, homodimer. The tRNA molecule binds across the dimer.

Its subcellular location is the cytoplasm. It is found in the cytosol. The catalysed reaction is tRNA(Ser) + L-serine + ATP = L-seryl-tRNA(Ser) + AMP + diphosphate + H(+). Functionally, catalyzes the attachment of serine to tRNA(Ser) in a two-step reaction: serine is first activated by ATP to form Ser-AMP and then transferred to the acceptor end of tRNA(Ser). The polypeptide is Serine--tRNA ligase, cytoplasmic (Schizosaccharomyces pombe (strain 972 / ATCC 24843) (Fission yeast)).